Reading from the N-terminus, the 663-residue chain is UvrABC system protein B (663 aa).

Residues 1 to 10 (MIDKRDDKPF) are compositionally biased toward basic and acidic residues. The interval 1–23 (MIDKRDDKPFKLKSKYKPSGDQP) is disordered. The Helicase ATP-binding domain occupies 31–271 (DNIEGGEKAQ…EQSIAKIQAE (241 aa)). 44 to 51 (GATGTGKT) provides a ligand contact to ATP. Residues 97-120 (YYDYYQPEAYVPSSDTYIEKDSSV) carry the Beta-hairpin motif. The Helicase C-terminal domain occupies 435–601 (QMDDLLGEIN…TIKKDIRGLI (167 aa)). Residues 627-662 (KEAINALQKQMQEAAELLDFELAAQMRDLILELKLM) form the UVR domain.

This sequence belongs to the UvrB family. As to quaternary structure, forms a heterotetramer with UvrA during the search for lesions. Interacts with UvrC in an incision complex.

It localises to the cytoplasm. In terms of biological role, the UvrABC repair system catalyzes the recognition and processing of DNA lesions. A damage recognition complex composed of 2 UvrA and 2 UvrB subunits scans DNA for abnormalities. Upon binding of the UvrA(2)B(2) complex to a putative damaged site, the DNA wraps around one UvrB monomer. DNA wrap is dependent on ATP binding by UvrB and probably causes local melting of the DNA helix, facilitating insertion of UvrB beta-hairpin between the DNA strands. Then UvrB probes one DNA strand for the presence of a lesion. If a lesion is found the UvrA subunits dissociate and the UvrB-DNA preincision complex is formed. This complex is subsequently bound by UvrC and the second UvrB is released. If no lesion is found, the DNA wraps around the other UvrB subunit that will check the other stand for damage. This Streptococcus pyogenes serotype M4 (strain MGAS10750) protein is UvrABC system protein B.